The following is a 199-amino-acid chain: Protein Thf1 (199 aa).

The stretch at 167-198 (QYSRVEKDISMYKSNIEKMKQALEIIALNLKT) forms a coiled coil.

It belongs to the THF1 family.

Its function is as follows. May be involved in photosynthetic membrane biogenesis. The sequence is that of Protein Thf1 from Prochlorococcus marinus (strain NATL1A).